A 94-amino-acid chain; its full sequence is Small ribosomal subunit protein bS20c (94 aa).

This sequence belongs to the bacterial ribosomal protein bS20 family.

Its subcellular location is the plastid. It localises to the chloroplast. Binds directly to 16S ribosomal RNA. The polypeptide is Small ribosomal subunit protein bS20c (Porphyra purpurea (Red seaweed)).